We begin with the raw amino-acid sequence, 592 residues long: Movement and RNA silencing protein VP6 (592 aa).

Residues 450–469 form a disordered region; it reads SSDEENADDPNQGWNGTPVH.

The protein resides in the host cell junction. The protein localises to the host plasmodesma. Functionally, transports viral genome to neighboring plant cells directly through plasmosdesmata, without any budding. The movement protein allows efficient cell to cell propagation, by bypassing the host cell wall barrier. Displays sequence non-specific nucleic acid binding activity. Acts as a suppressor of RNA-mediated gene silencing, also known as post-transcriptional gene silencing (PTGS), a mechanism of plant viral defense that limits the accumulation of viral RNAs. The sequence is that of Movement and RNA silencing protein VP6 from Oryza latifolia (Indian wild rice).